The chain runs to 590 residues: EGF-like and EMI domain-containing protein 1 (590 aa).

An N-terminal signal peptide occupies residues 1–23 (MTSPLCFWCFCVWAAANWPPGSA). An EMI domain is found at 44–104 (LSRPCAQAFI…RCCPGWIQWD (61 aa)). One can recognise an EGF-like 1 domain in the interval 105-145 (DEPGCFSSLSSLGTHFSGRECSYQDTRQCLCSQGFHGPHCQ). Disulfide bonds link C109–C125, C135–C144, C168–C179, C175–C188, C190–C203, C209–C219, C215–C228, C230–C243, C249–C260, C256–C269, and C271–C284. One can recognise an EGF-like 2; calcium-binding domain in the interval 164–204 (NVDECAVVNGGCQQRCINTLGTFHCECDTGYRRHADERTCI). The EGF-like 3 domain occupies 205 to 244 (KTDPCAGANGCAHLCQTENGMARCACHAGYQLSEDKKACE). The EGF-like 4; calcium-binding domain maps to 245–285 (DINECAGELAPCAHHCVNSKGSFTCTCHPGFELGADRKHCY). Positions 393-424 (RLAQNPPQPFPYLDPSLTASYEDEDNDDADSE) are disordered. Acidic residues predominate over residues 413–424 (YEDEDNDDADSE). The 37-residue stretch at 445–481 (FGLDCSLSCEDCMNGGRCQEGKSGCLCPAEWTGLICN) folds into the EGF-like 5 domain. Cystine bridges form between C449/C462, C456/C469, and C471/C480.

The sequence is that of EGF-like and EMI domain-containing protein 1 (Egfem1) from Mus musculus (Mouse).